Here is a 39-residue protein sequence, read N- to C-terminus: Neuropeptide F (39 aa).

Phenylalanine 39 carries the phenylalanine amide modification.

This sequence belongs to the NPY family. As to expression, neuronal somata and fibers.

It localises to the secreted. Functionally, may have an important physiological role in neuroregulation. This is Neuropeptide F from Cornu aspersum (Brown garden snail).